The primary structure comprises 277 residues: UPF0276 protein PSEEN3355 (277 aa).

Belongs to the UPF0276 family.

The polypeptide is UPF0276 protein PSEEN3355 (Pseudomonas entomophila (strain L48)).